Reading from the N-terminus, the 331-residue chain is Tetraacyldisaccharide 4'-kinase (331 aa).

59–66 (FVGGTGKT) lines the ATP pocket.

It belongs to the LpxK family.

It carries out the reaction a lipid A disaccharide + ATP = a lipid IVA + ADP + H(+). Its pathway is glycolipid biosynthesis; lipid IV(A) biosynthesis; lipid IV(A) from (3R)-3-hydroxytetradecanoyl-[acyl-carrier-protein] and UDP-N-acetyl-alpha-D-glucosamine: step 6/6. In terms of biological role, transfers the gamma-phosphate of ATP to the 4'-position of a tetraacyldisaccharide 1-phosphate intermediate (termed DS-1-P) to form tetraacyldisaccharide 1,4'-bis-phosphate (lipid IVA). This Alkalilimnicola ehrlichii (strain ATCC BAA-1101 / DSM 17681 / MLHE-1) protein is Tetraacyldisaccharide 4'-kinase.